Reading from the N-terminus, the 92-residue chain is Large ribosomal subunit protein bL27 (92 aa).

Residues 1–26 (MAHKKGASSSSNGRDSESKRLGVKRF) form a disordered region.

It belongs to the bacterial ribosomal protein bL27 family.

The chain is Large ribosomal subunit protein bL27 from Corynebacterium aurimucosum (strain ATCC 700975 / DSM 44827 / CIP 107346 / CN-1) (Corynebacterium nigricans).